Reading from the N-terminus, the 133-residue chain is Ribosome-binding factor A (133 aa).

This sequence belongs to the RbfA family. As to quaternary structure, monomer. Binds 30S ribosomal subunits, but not 50S ribosomal subunits or 70S ribosomes.

It is found in the cytoplasm. One of several proteins that assist in the late maturation steps of the functional core of the 30S ribosomal subunit. Associates with free 30S ribosomal subunits (but not with 30S subunits that are part of 70S ribosomes or polysomes). Required for efficient processing of 16S rRNA. May interact with the 5'-terminal helix region of 16S rRNA. This chain is Ribosome-binding factor A, found in Enterobacter sp. (strain 638).